A 24-amino-acid chain; its full sequence is MTLIKYKRKNIQFYKKIIANGYAK.

This is an uncharacterized protein from Schizosaccharomyces pombe (strain 972 / ATCC 24843) (Fission yeast).